The chain runs to 479 residues: Zinc finger and SCAN domain-containing protein 26 (479 aa).

Lys17 participates in a covalent cross-link: Glycyl lysine isopeptide (Lys-Gly) (interchain with G-Cter in SUMO2). The region spanning 51-133 (CKRFRQLRYE…VFLEDLQLEL (83 aa)) is the SCAN box domain. Positions 155-187 (TAPGKATPERQVQPEGDVPQPEREKGEAKRIEN) are disordered. Basic and acidic residues predominate over residues 174–187 (QPEREKGEAKRIEN). The segment at 232–254 (CKCSEYGQAFFQHSDLIKHESSH) adopts a C2H2-type 1; degenerate zinc-finger fold. C2H2-type zinc fingers lie at residues 283 to 305 (HQCH…QKIH), 311 to 333 (YQCK…LRIH), 339 to 361 (YLCI…QRIH), 367 to 389 (CQCK…QRIH), 395 to 417 (HQCN…HRIH), 423 to 445 (FKCT…VRIH), and 451 to 473 (YKCN…QRYH).

It localises to the nucleus. Functionally, may be involved in transcriptional regulation. This chain is Zinc finger and SCAN domain-containing protein 26 (ZSCAN26), found in Bos taurus (Bovine).